A 676-amino-acid chain; its full sequence is MSGGGDVVCTGWLRKSPPEKKLRRYAWKKRWFILRSGRMSGDPDVLEYYKNDHSKKPLRIINLNFCEQVDAGLTFNKKELQDSFVFDIKTSERTFYLVAETEEDMNKWVQSICQICGFNQAEESTDSLRNVSSAGHGPRSSPAELSSSSQHLLRERKSSAPSHSSQPTLFTFEPPVSNHMQPTLSTSAPQEYLYLHQCISRRAENARSASFSQGTRASFLMRSDTAVQKLAQGNGHCVNGISGQVHGFYSLPKPSRHNTEFRDSTYDLPRSLASHGHTKGSLTGSETDNEDVYTFKTPSNTLCREFGDLLVDNMDVPATPLSAYQIPRTFTLDKNHNAMTVATPGDSAIAPPPRPPKPSQAETPRWGSPQQRPPISENSRSVAATIPRRNTLPAMDNSRLHRASSCETYEYPQRGGESAGRSAESMSDGVGSFLPGKMIVGRSDSTNSEDNYVPMNPGSSTLLAMERAGDNSQSVYIPMSPGAHHFDSLGYPSTTLPVHRGPSRGSEIQPPPVNRNLKPDRKAKPTPLDLRNNTVIDELPFKSPITKSWSRANHTFNSSSSQYCRPISTQSITSTDSGDSEENYVPMQNPVSASPVPSGTNSPAPKKSTGSVDYLALDFQPSSPSPHRKPSTSSVTSDEKVDYVQVDKEKTQALQNTMQEWTDVRQSSEPSKGAKL.

Phosphoserine is present on serine 2. The 112-residue stretch at 6–117 (DVVCTGWLRK…WVQSICQICG (112 aa)) folds into the PH domain. Residues 127-178 (SLRNVSSAGHGPRSSPAELSSSSQHLLRERKSSAPSHSSQPTLFTFEPPVSN) form a disordered region. 11 positions are modified to phosphoserine: serine 133, serine 140, serine 141, serine 148, serine 149, serine 159, serine 164, serine 210, serine 218, serine 223, and serine 264. Low complexity predominate over residues 140–149 (SSPAELSSSS). The segment covering 159 to 169 (SAPSHSSQPTL) has biased composition (polar residues). Residue threonine 265 is modified to Phosphothreonine. Tyrosine 266 bears the Phosphotyrosine mark. At threonine 278 the chain carries Phosphothreonine. A phosphoserine mark is found at serine 281 and serine 285. The residue at position 287 (threonine 287) is a Phosphothreonine. Phosphotyrosine is present on tyrosine 293. Threonine 331 is modified (phosphothreonine). The interval 341 to 430 (VATPGDSAIA…RSAESMSDGV (90 aa)) is disordered. The SH3-binding signature appears at 351-358 (PPPRPPKP). Phosphoserine is present on serine 368. Phosphothreonine is present on residues threonine 385 and threonine 391. Residue serine 405 is modified to Phosphoserine. The residue at position 408 (threonine 408) is a Phosphothreonine. Phosphoserine is present on residues serine 422 and serine 425. At tyrosine 452 the chain carries Phosphotyrosine. Serine 480 is subject to Phosphoserine. Residues 492–531 (PSTTLPVHRGPSRGSEIQPPPVNRNLKPDRKAKPTPLDLR) are disordered. The SH3-binding signature appears at 510–519 (PPPVNRNLKP). Residue serine 543 is modified to Phosphoserine. 2 stretches are compositionally biased toward polar residues: residues 556–577 (FNSSSSQYCRPISTQSITSTDS) and 589–611 (NPVSASPVPSGTNSPAPKKSTGS). Disordered stretches follow at residues 556-643 (FNSS…KVDY) and 656-676 (NTMQEWTDVRQSSEPSKGAKL). Phosphoserine occurs at positions 622 and 623. A Phosphotyrosine modification is found at tyrosine 643. Polar residues predominate over residues 656–670 (NTMQEWTDVRQSSEP).

Belongs to the GAB family. Part of a complex composed of EEIG1, TNFRSF11A/RANK, PLCG2, GAB2, TEC and BTK; complex formation increases in the presence of TNFSF11/RANKL. Interacts with SHC1; may mediate interaction with receptors. Interacts with SYK. Interacts with PI-3 kinase. Interacts with GRB2 (via SH3 2 domain). Interacts (phosphorylated) with PTPN11. Interacts with TNFRSF11A (via cytoplasmic domain). Interacts (phosphorylated) with 14-3-3 family proteins SFN, YWHAB, YWHAE, YWHAG, YWHAH, YWHAQ and YWHAZ; prevents interaction with GRB2 and attenuates GAB2 signaling. Interacts with HCK. In terms of processing, phosphorylated on tyrosine residue(s) by the thrombopoietin receptor (TPOR), stem cell factor receptor (SCFR), and T-cell and B-cell antigen receptors, gp130, IL-2R and IL-3R. Phosphorylated upon stimulation of TNFRSF11A/RANK by TNFSF11/RANKL. Phosphorylated upon EGF stimulation. Phosphorylated on tyrosine residues by HCK upon IL6 signaling. Dephosphorylated by PTPN11.

It localises to the cytoplasm. It is found in the cell membrane. The protein localises to the membrane raft. Adapter protein which acts downstream of several membrane receptors including cytokine, antigen, hormone, cell matrix and growth factor receptors to regulate multiple signaling pathways. Regulates osteoclast differentiation mediating the TNFRSF11A/RANK signaling. In allergic response, it plays a role in mast cells activation and degranulation through PI-3-kinase regulation. Also involved in the regulation of cell proliferation and hematopoiesis. The protein is GRB2-associated-binding protein 2 (GAB2) of Homo sapiens (Human).